Reading from the N-terminus, the 208-residue chain is UPF0711 protein C18orf21 homolog (208 aa).

The span at 123-137 (SKHKSTPGSASKHRT) shows a compositional bias: basic residues. 2 disordered regions span residues 123 to 180 (SKHK…KSSP) and 189 to 208 (MLENKQQGKKGGLKDFLSSL). A compositionally biased stretch (polar residues) spans 138-152 (PQTVNWATPKSVANR). Low complexity predominate over residues 153–180 (TPSSTPRSASSNTSSSSSSKSSSVKSSP).

The protein belongs to the UPF0711 family.

The polypeptide is UPF0711 protein C18orf21 homolog (Danio rerio (Zebrafish)).